The chain runs to 213 residues: Triosephosphate isomerase (213 aa).

7–9 (NLK) is a substrate binding site. Residue H88 is the Electrophile of the active site. The Proton acceptor role is filled by E136. I141 and G174 together coordinate substrate.

Belongs to the triosephosphate isomerase family. In terms of assembly, homotetramer; dimer of dimers.

It is found in the cytoplasm. It carries out the reaction D-glyceraldehyde 3-phosphate = dihydroxyacetone phosphate. The protein operates within carbohydrate biosynthesis; gluconeogenesis. It participates in carbohydrate degradation; glycolysis; D-glyceraldehyde 3-phosphate from glycerone phosphate: step 1/1. Functionally, involved in the gluconeogenesis. Catalyzes stereospecifically the conversion of dihydroxyacetone phosphate (DHAP) to D-glyceraldehyde-3-phosphate (G3P). The polypeptide is Triosephosphate isomerase (Thermoplasma volcanium (strain ATCC 51530 / DSM 4299 / JCM 9571 / NBRC 15438 / GSS1)).